A 390-amino-acid chain; its full sequence is Lipid-A-disaccharide synthase (390 aa).

It belongs to the LpxB family.

It carries out the reaction a lipid X + a UDP-2-N,3-O-bis[(3R)-3-hydroxyacyl]-alpha-D-glucosamine = a lipid A disaccharide + UDP + H(+). Its pathway is bacterial outer membrane biogenesis; LPS lipid A biosynthesis. Its function is as follows. Condensation of UDP-2,3-diacylglucosamine and 2,3-diacylglucosamine-1-phosphate to form lipid A disaccharide, a precursor of lipid A, a phosphorylated glycolipid that anchors the lipopolysaccharide to the outer membrane of the cell. The protein is Lipid-A-disaccharide synthase of Haemophilus influenzae (strain 86-028NP).